The primary structure comprises 32 residues: uncharacterized protein (32 aa).

This is an uncharacterized protein from Gallus gallus (Chicken).